Here is a 189-residue protein sequence, read N- to C-terminus: MVRYVKFSRTANRGVHISAEARINERIRVPEVRLVGPNGEQVGIVRIEDARKLAFDADLDLVEVAPNAKPPVCKIMDYGKFKYEAAQKARESRKNQQQTVVKEQKLRPKIDDHDYETKKNNVIRFLEKGSKVKVTIMFRGREQARPELGYRLLERLANDVADFGIVETRAKQDGRNMTMVLGPVRKGKK.

Belongs to the IF-3 family. In terms of assembly, monomer.

The protein resides in the cytoplasm. Its function is as follows. IF-3 binds to the 30S ribosomal subunit and shifts the equilibrium between 70S ribosomes and their 50S and 30S subunits in favor of the free subunits, thus enhancing the availability of 30S subunits on which protein synthesis initiation begins. This is Translation initiation factor IF-3 from Corynebacterium glutamicum (strain R).